Reading from the N-terminus, the 353-residue chain is Protein RecA (353 aa).

67 to 74 (GPESSGKT) lines the ATP pocket.

This sequence belongs to the RecA family.

The protein resides in the cytoplasm. Can catalyze the hydrolysis of ATP in the presence of single-stranded DNA, the ATP-dependent uptake of single-stranded DNA by duplex DNA, and the ATP-dependent hybridization of homologous single-stranded DNAs. It interacts with LexA causing its activation and leading to its autocatalytic cleavage. This is Protein RecA from Shewanella woodyi (strain ATCC 51908 / MS32).